Reading from the N-terminus, the 203-residue chain is Putative zinc finger protein 876 (203 aa).

4 C2H2-type zinc fingers span residues tyrosine 63–histidine 85, tyrosine 91–histidine 113, tyrosine 119–histidine 141, and tyrosine 147–histidine 169. Residues tyrosine 175–glutamine 197 form a C2H2-type 5; degenerate zinc finger.

This sequence belongs to the krueppel C2H2-type zinc-finger protein family.

It localises to the nucleus. In terms of biological role, may be involved in transcriptional regulation. This chain is Putative zinc finger protein 876 (ZNF876P), found in Homo sapiens (Human).